Consider the following 310-residue polypeptide: Ribosomal RNA small subunit methyltransferase H (310 aa).

S-adenosyl-L-methionine contacts are provided by residues 33 to 35 (AGH), Asp-53, Phe-79, Asp-100, and Gln-107.

Belongs to the methyltransferase superfamily. RsmH family.

It localises to the cytoplasm. It catalyses the reaction cytidine(1402) in 16S rRNA + S-adenosyl-L-methionine = N(4)-methylcytidine(1402) in 16S rRNA + S-adenosyl-L-homocysteine + H(+). Its function is as follows. Specifically methylates the N4 position of cytidine in position 1402 (C1402) of 16S rRNA. The chain is Ribosomal RNA small subunit methyltransferase H from Clostridium tetani (strain Massachusetts / E88).